The sequence spans 188 residues: ATP synthase subunit b (188 aa).

A helical membrane pass occupies residues 21–41 (ILPHLGELIVGIIFAIIIYAV).

It belongs to the ATPase B chain family. In terms of assembly, F-type ATPases have 2 components, F(1) - the catalytic core - and F(0) - the membrane proton channel. F(1) has five subunits: alpha(3), beta(3), gamma(1), delta(1), epsilon(1). F(0) has three main subunits: a(1), b(2) and c(10-14). The alpha and beta chains form an alternating ring which encloses part of the gamma chain. F(1) is attached to F(0) by a central stalk formed by the gamma and epsilon chains, while a peripheral stalk is formed by the delta and b chains.

The protein resides in the cell membrane. F(1)F(0) ATP synthase produces ATP from ADP in the presence of a proton or sodium gradient. F-type ATPases consist of two structural domains, F(1) containing the extramembraneous catalytic core and F(0) containing the membrane proton channel, linked together by a central stalk and a peripheral stalk. During catalysis, ATP synthesis in the catalytic domain of F(1) is coupled via a rotary mechanism of the central stalk subunits to proton translocation. In terms of biological role, component of the F(0) channel, it forms part of the peripheral stalk, linking F(1) to F(0). The sequence is that of ATP synthase subunit b from Kineococcus radiotolerans (strain ATCC BAA-149 / DSM 14245 / SRS30216).